We begin with the raw amino-acid sequence, 238 residues long: Ribonuclease PH (238 aa).

Residues Arg86 and 124–126 (GTR) each bind phosphate.

Belongs to the RNase PH family. As to quaternary structure, homohexameric ring arranged as a trimer of dimers.

The enzyme catalyses tRNA(n+1) + phosphate = tRNA(n) + a ribonucleoside 5'-diphosphate. In terms of biological role, phosphorolytic 3'-5' exoribonuclease that plays an important role in tRNA 3'-end maturation. Removes nucleotide residues following the 3'-CCA terminus of tRNAs; can also add nucleotides to the ends of RNA molecules by using nucleoside diphosphates as substrates, but this may not be physiologically important. Probably plays a role in initiation of 16S rRNA degradation (leading to ribosome degradation) during starvation. The chain is Ribonuclease PH from Erwinia tasmaniensis (strain DSM 17950 / CFBP 7177 / CIP 109463 / NCPPB 4357 / Et1/99).